Here is a 663-residue protein sequence, read N- to C-terminus: Transmembrane 9 superfamily member 2 (663 aa).

Residues 1–28 form the signal peptide; that stretch reads MSARLPVLSPPRWPRLLLLSLLLLGAVP. Residues 29–300 are Lumenal-facing; sequence GPRRSGGFYL…LESMPHTHIQ (272 aa). Residues 301 to 321 form a helical membrane-spanning segment; that stretch reads WFSIMNSLVIVLFLSGMVAMI. At 322–374 the chain is on the cytoplasmic side; it reads MLRTLHKDIARYNQMDSTEDAQEEFGWKLVHGDIFRPPRKGMLLSVFLGSGTQ. Residues 375-395 form a helical membrane-spanning segment; the sequence is ILIMTFVTLFFACLGFLSPAN. Over 396–398 the chain is Lumenal; it reads RGA. The chain crosses the membrane as a helical span at residues 399 to 419; it reads LMTCAVVLWVLLGTPAGYVAA. Residues 420 to 437 lie on the Cytoplasmic side of the membrane; sequence RFYKSFGGEKWKTNVLLT. The chain crosses the membrane as a helical span at residues 438-458; the sequence is SFLCPGIVFADFFIMNLILWG. Residues 459–466 are Lumenal-facing; the sequence is EGSSAAIP. Residues 467-487 traverse the membrane as a helical segment; the sequence is FGTLVAILALWFCISVPLTFI. Residues 488–522 are Cytoplasmic-facing; it reads GAYFGFKKNAIEHPVRTNQIPRQIPEQSFYTKPLP. The helical transmembrane segment at 523–543 threads the bilayer; it reads GIIMGGILPFGCIFIQLFFIL. The Lumenal segment spans residues 544 to 554; sequence NSIWSHQMYYM. Residues 555–575 form a helical membrane-spanning segment; it reads FGFLFLVFIILVITCSEATIL. Topologically, residues 576-591 are cytoplasmic; the sequence is LCYFHLCAEDYHWQWR. A helical membrane pass occupies residues 592–612; sequence SFLTSGFTAVYFLIYAVHYFF. The Lumenal portion of the chain corresponds to 613–631; it reads SKLQITGTASTILYFGYTM. A helical membrane pass occupies residues 632-652; sequence IMVLIFFLFTGTIGFFACFWF. Residues 653–663 are Cytoplasmic-facing; the sequence is VTKIYSVVKVD.

It belongs to the nonaspanin (TM9SF) (TC 9.A.2) family.

It localises to the endosome membrane. The protein resides in the golgi outpost. Its subcellular location is the cytoplasm. The protein localises to the cytoskeleton. It is found in the microtubule organizing center. Its function is as follows. In the intracellular compartments, may function as a channel or small molecule transporter. This is Transmembrane 9 superfamily member 2 (TM9SF2) from Pongo abelii (Sumatran orangutan).